Here is a 319-residue protein sequence, read N- to C-terminus: GTPase Era (319 aa).

The Era-type G domain maps to 9–196 (RSGVSLIIGR…MRTLRDLLPE (188 aa)). The G1 stretch occupies residues 17–24 (GRPSSGKS). 17–24 (GRPSSGKS) lines the GTP pocket. The segment at 43-47 (QTTRN) is G2. The tract at residues 64–67 (DTPG) is G3. GTP-binding positions include 64-68 (DTPGY) and 127-130 (NKVD). Residues 127 to 130 (NKVD) form a G4 region. Residues 175-177 (ISA) are G5. Residues 227–303 (CRDELPHALY…HISLDIRVKV (77 aa)) form the KH type-2 domain.

This sequence belongs to the TRAFAC class TrmE-Era-EngA-EngB-Septin-like GTPase superfamily. Era GTPase family. As to quaternary structure, monomer.

It localises to the cytoplasm. It is found in the cell inner membrane. Functionally, an essential GTPase that binds both GDP and GTP, with rapid nucleotide exchange. Plays a role in 16S rRNA processing and 30S ribosomal subunit biogenesis and possibly also in cell cycle regulation and energy metabolism. This is GTPase Era from Treponema pallidum (strain Nichols).